We begin with the raw amino-acid sequence, 204 residues long: 8-oxoguanine DNA glycosylase/AP lyase (204 aa).

Catalysis depends on residues Lys129 and Asp147.

This sequence belongs to the type-2 OGG1 family.

The enzyme catalyses 2'-deoxyribonucleotide-(2'-deoxyribose 5'-phosphate)-2'-deoxyribonucleotide-DNA = a 3'-end 2'-deoxyribonucleotide-(2,3-dehydro-2,3-deoxyribose 5'-phosphate)-DNA + a 5'-end 5'-phospho-2'-deoxyribonucleoside-DNA + H(+). Functionally, catalyzes the excision of an oxidatively damaged form of guanine (7,8-dihydro-8-oxoguanine = 8-oxoG) from DNA. Also cleaves the DNA backbone at apurinic/apyrimidinic sites (AP sites). Prefers oligomers containing 8-oxoG:C, 8-oxoG:T and 8-oxoG:G base pairs, and is less effective on oligomers containing 8-oxoG:A mispairs. This Thermoplasma volcanium (strain ATCC 51530 / DSM 4299 / JCM 9571 / NBRC 15438 / GSS1) protein is 8-oxoguanine DNA glycosylase/AP lyase.